The chain runs to 469 residues: Argininosuccinate lyase (469 aa).

This sequence belongs to the lyase 1 family. Argininosuccinate lyase subfamily.

The protein resides in the cytoplasm. It carries out the reaction 2-(N(omega)-L-arginino)succinate = fumarate + L-arginine. It functions in the pathway amino-acid biosynthesis; L-arginine biosynthesis; L-arginine from L-ornithine and carbamoyl phosphate: step 3/3. The protein is Argininosuccinate lyase of Saccharophagus degradans (strain 2-40 / ATCC 43961 / DSM 17024).